A 93-amino-acid polypeptide reads, in one-letter code: Large ribosomal subunit protein uL23 (93 aa).

The protein belongs to the universal ribosomal protein uL23 family. Part of the 50S ribosomal subunit. Contacts protein L29, and trigger factor when it is bound to the ribosome.

Its function is as follows. One of the early assembly proteins it binds 23S rRNA. One of the proteins that surrounds the polypeptide exit tunnel on the outside of the ribosome. Forms the main docking site for trigger factor binding to the ribosome. The protein is Large ribosomal subunit protein uL23 of Campylobacter hominis (strain ATCC BAA-381 / DSM 21671 / CCUG 45161 / LMG 19568 / NCTC 13146 / CH001A).